Reading from the N-terminus, the 301-residue chain is GTPase Era (301 aa).

Residues 4–173 (KAGFVALIGK…LECISKHLSP (170 aa)) form the Era-type G domain. The G1 stretch occupies residues 12–19 (GKPNAGKS). A GTP-binding site is contributed by 12 to 19 (GKPNAGKS). The interval 38 to 42 (NATRK) is G2. A G3 region spans residues 64–67 (DTPG). GTP contacts are provided by residues 64–68 (DTPGL) and 122–125 (SKID). The interval 122–125 (SKID) is G4. Residues 152-154 (LSA) are G5. The KH type-2 domain maps to 204–280 (LSDEIPYESD…FLNLQVIAQK (77 aa)).

Belongs to the TRAFAC class TrmE-Era-EngA-EngB-Septin-like GTPase superfamily. Era GTPase family. In terms of assembly, monomer.

The protein resides in the cytoplasm. It is found in the cell inner membrane. In terms of biological role, an essential GTPase that binds both GDP and GTP, with rapid nucleotide exchange. Plays a role in 16S rRNA processing and 30S ribosomal subunit biogenesis and possibly also in cell cycle regulation and energy metabolism. The polypeptide is GTPase Era (Helicobacter pylori (strain Shi470)).